Here is a 298-residue protein sequence, read N- to C-terminus: Small ribosomal subunit biogenesis GTPase RsgA (298 aa).

In terms of domain architecture, CP-type G spans 67–228 (TNELVRPPIS…IADTPGFSSL (162 aa)). GTP contacts are provided by residues 116 to 119 (TKMD) and 171 to 179 (GQSGVGKSS). Cys-252, Cys-257, His-259, and Cys-265 together coordinate Zn(2+).

It belongs to the TRAFAC class YlqF/YawG GTPase family. RsgA subfamily. In terms of assembly, monomer. Associates with 30S ribosomal subunit, binds 16S rRNA. Requires Zn(2+) as cofactor.

It is found in the cytoplasm. In terms of biological role, one of several proteins that assist in the late maturation steps of the functional core of the 30S ribosomal subunit. Helps release RbfA from mature subunits. May play a role in the assembly of ribosomal proteins into the subunit. Circularly permuted GTPase that catalyzes slow GTP hydrolysis, GTPase activity is stimulated by the 30S ribosomal subunit. This chain is Small ribosomal subunit biogenesis GTPase RsgA, found in Bacillus pumilus (strain SAFR-032).